The primary structure comprises 379 residues: Copper-containing nitrite reductase (379 aa).

The segment at residues 1–32 is a signal peptide (tat-type signal); sequence MSEQFRLTRRSMLAGAAVAGALAPVVTSVAHA. Plastocyanin-like domains follow at residues 33–214 and 215–379; these read EGGG…YDKV and YYVG…PTSG. The Cu cation site is built by histidine 134, histidine 139, histidine 174, cysteine 175, histidine 184, methionine 189, and histidine 345.

Belongs to the multicopper oxidase family. As to quaternary structure, homotrimer. Cu(2+) serves as cofactor. The cofactor is Cu(+). Requires FAD as cofactor. Post-translationally, predicted to be exported by the Tat system. The position of the signal peptide cleavage has not been experimentally proven.

The protein resides in the periplasm. It carries out the reaction nitric oxide + Fe(III)-[cytochrome c] + H2O = Fe(II)-[cytochrome c] + nitrite + 2 H(+). It functions in the pathway nitrogen metabolism; nitrate reduction (denitrification); dinitrogen from nitrate: step 2/4. This is Copper-containing nitrite reductase (nirU) from Neorhizobium galegae (Rhizobium galegae).